The chain runs to 127 residues: Odontogenesis-associated phosphoprotein (127 aa).

Residues 1 to 23 (MAPGFHFSWLLVSWLVVTTVKGQ) form the signal peptide.

In terms of tissue distribution, expressed in enamel organs and not expressed in the heart, kidney, or spleen.

Its subcellular location is the secreted. In terms of biological role, may promote nucleation of hydroxyapatite. In Rattus norvegicus (Rat), this protein is Odontogenesis-associated phosphoprotein.